Here is a 463-residue protein sequence, read N- to C-terminus: Cytochrome c-552 (463 aa).

The first 23 residues, 1-23 (MNVKSIALSAVIATSFLAAGAMA), serve as a signal peptide directing secretion. H83 contacts heme c. Heme-binding residues include C111, C114, and K115. C149, C152, H153, C191, C194, and H195 together coordinate heme c. Ca(2+) contacts are provided by E197, Y198, K246, and Q248. Y198 contacts substrate. H249 is a binding site for substrate. Positions 260, 267, 270, 271, 286, 299, 302, 303, and 378 each coordinate heme c.

The protein belongs to the cytochrome c-552 family. The cofactor is Ca(2+). Requires heme c as cofactor.

The protein localises to the periplasm. It catalyses the reaction 6 Fe(III)-[cytochrome c] + NH4(+) + 2 H2O = 6 Fe(II)-[cytochrome c] + nitrite + 8 H(+). It participates in nitrogen metabolism; nitrate reduction (assimilation). Functionally, catalyzes the reduction of nitrite to ammonia, consuming six electrons in the process. In Shewanella frigidimarina (strain NCIMB 400), this protein is Cytochrome c-552.